A 425-amino-acid polypeptide reads, in one-letter code: tRNA (guanine-N(7)-)-methyltransferase non-catalytic subunit wuho (425 aa).

The disordered stretch occupies residues 67-102 (ATCAGKEPGGKEQQLTKQPEEGGTTASGSGVTSTSV). Low complexity predominate over residues 88-102 (GGTTASGSGVTSTSV). WD repeat units follow at residues 97–138 (VTST…ARLL), 142–181 (PLARAASAVRFCSDSSSVLVTDKTGDCYQYDCVELEAPPR), 185–224 (GHLSVVYDILWSEDQQHIITCDRDDKIRVTNYPATFDIHS), 228–266 (GHREFVSGLALLTDKHIASASGDKTLRVWNYIQGKELLQ), and 325–365 (AGSW…PATS).

It belongs to the WD repeat TRM82 family. Forms a heterodimer with the catalytic subunit Mettl1. Interacts with mei-P26 and weakly interacts with bgcn; required for the function or formation of the mei-P26-bgcn-bam-sxl complex. Interacts with nanos; may be involved in mei-P26-dependent derepression of the BMP signaling pathway. Interacts with Myc; the interaction may be mediated by mei-P26 and may be involved in the regulation of ribosome biogenesis. As to expression, in testis, it is present at high level in hub cells, a niche for germline stem cells of testis. Ubiquitously expressed in all testicular cells throughout spermatogenesis. Ubiquitously expressed in all germline and somatic cells of the ovary.

The protein resides in the nucleus. It localises to the cytoplasm. The protein operates within tRNA modification; N(7)-methylguanine-tRNA biosynthesis. Its function is as follows. Required for the Mettl1-dependent formation of N(7)-methylguanine at position 46 (m7G46) in tRNA. In the Mettl1-wuho methyltransferase complex, it is required to stabilize and induce conformational changes of the catalytic subunit. Required for binding of nanos mRNA and repression of translation by the mei-P26-bgcn-bam-sxl complex. May cooperate with mei-P26 and nanos to derepress the BMP signaling pathway. May cooperate with mei-P26 to suppress expression of a subset of microRNAs. May cooperate with mei-P26 to regulate bam expression levels in germline cells during gametogenesis. Required to promote mitosis to meiosis transition during gametogenesis. May regulate germline cell division in part by regulating ribosome biogenesis. This chain is tRNA (guanine-N(7)-)-methyltransferase non-catalytic subunit wuho, found in Drosophila yakuba (Fruit fly).